The primary structure comprises 138 residues: Large-conductance mechanosensitive channel (138 aa).

3 helical membrane-spanning segments follow: residues 15 to 35, 38 to 58, and 80 to 100; these read VDLA…NSIV, IIMP…MFIQ, and GNFI…FLVV.

The protein belongs to the MscL family. Homopentamer.

It is found in the cell inner membrane. Channel that opens in response to stretch forces in the membrane lipid bilayer. May participate in the regulation of osmotic pressure changes within the cell. This chain is Large-conductance mechanosensitive channel, found in Brucella ovis (strain ATCC 25840 / 63/290 / NCTC 10512).